The following is a 96-amino-acid chain: Keratin-associated protein 12-1 (96 aa).

14 consecutive repeat copies span residues 10–14 (CQPAC), 15–19 (CAPSP), 24–28 (CYIPV), 30–34 (CQSSV), 35–39 (CVPVS), 45–49 (CVPVR), 50–54 (CQSSV), 55–59 (CVPVS), 60–64 (CRPVV), 70–74 (CQSSG), 75–79 (CCQPS), 80–84 (CTSVL), 85–89 (CRPIS), and 90–94 (CSTPS). The 14 X 5 AA approximate repeats stretch occupies residues 10–94 (CQPACCAPSP…CRPISCSTPS (85 aa)).

The protein belongs to the KRTAP type 12 family. Interacts with hair keratins. In terms of tissue distribution, restricted to a narrow region of the hair fiber cuticle, lying approximately 20 cell layers above the apex of the dermal papilla of the hair root; not detected in any other tissues.

In terms of biological role, in the hair cortex, hair keratin intermediate filaments are embedded in an interfilamentous matrix, consisting of hair keratin-associated proteins (KRTAP), which are essential for the formation of a rigid and resistant hair shaft through their extensive disulfide bond cross-linking with abundant cysteine residues of hair keratins. The matrix proteins include the high-sulfur and high-glycine-tyrosine keratins. The sequence is that of Keratin-associated protein 12-1 (KRTAP12-1) from Homo sapiens (Human).